The sequence spans 295 residues: Nucleotide-binding protein LSL_1171 (295 aa).

13 to 20 (GMSGAGKT) lines the ATP pocket. 63–66 (DLRS) contacts GTP.

This sequence belongs to the RapZ-like family.

In terms of biological role, displays ATPase and GTPase activities. The sequence is that of Nucleotide-binding protein LSL_1171 from Ligilactobacillus salivarius (strain UCC118) (Lactobacillus salivarius).